Here is a 325-residue protein sequence, read N- to C-terminus: Tetraacyldisaccharide 4'-kinase (325 aa).

ATP is bound at residue 58–65 (TVGGSGKT).

Belongs to the LpxK family.

It catalyses the reaction a lipid A disaccharide + ATP = a lipid IVA + ADP + H(+). It functions in the pathway glycolipid biosynthesis; lipid IV(A) biosynthesis; lipid IV(A) from (3R)-3-hydroxytetradecanoyl-[acyl-carrier-protein] and UDP-N-acetyl-alpha-D-glucosamine: step 6/6. In terms of biological role, transfers the gamma-phosphate of ATP to the 4'-position of a tetraacyldisaccharide 1-phosphate intermediate (termed DS-1-P) to form tetraacyldisaccharide 1,4'-bis-phosphate (lipid IVA). In Coxiella burnetii (strain CbuG_Q212) (Coxiella burnetii (strain Q212)), this protein is Tetraacyldisaccharide 4'-kinase.